The chain runs to 375 residues: Chaperone protein DnaJ (375 aa).

The J domain maps to 5–69 (DYYEILGVSK…QKRAAYDQYG (65 aa)). The segment at 130–208 (GVTKEIRIPT…CHGHGRVEKA (79 aa)) adopts a CR-type zinc-finger fold. Positions 143, 146, 160, 163, 182, 185, 196, and 199 each coordinate Zn(2+). 4 CXXCXGXG motif repeats span residues 143–150 (CGVCHGSG), 160–167 (CPTCHGQG), 182–189 (CPHCHGRG), and 196–203 (CNSCHGHG).

This sequence belongs to the DnaJ family. In terms of assembly, homodimer. Zn(2+) is required as a cofactor.

It localises to the cytoplasm. In terms of biological role, participates actively in the response to hyperosmotic and heat shock by preventing the aggregation of stress-denatured proteins and by disaggregating proteins, also in an autonomous, DnaK-independent fashion. Unfolded proteins bind initially to DnaJ; upon interaction with the DnaJ-bound protein, DnaK hydrolyzes its bound ATP, resulting in the formation of a stable complex. GrpE releases ADP from DnaK; ATP binding to DnaK triggers the release of the substrate protein, thus completing the reaction cycle. Several rounds of ATP-dependent interactions between DnaJ, DnaK and GrpE are required for fully efficient folding. Also involved, together with DnaK and GrpE, in the DNA replication of plasmids through activation of initiation proteins. This is Chaperone protein DnaJ from Serratia proteamaculans (strain 568).